Reading from the N-terminus, the 139-residue chain is uncharacterized protein (139 aa).

The next 2 helical transmembrane spans lie at 71–91 (LFSA…ATLL) and 97–117 (ENEL…FVMV).

The protein belongs to the RseC family.

It is found in the cell inner membrane. This is an uncharacterized protein from Haemophilus influenzae (strain ATCC 51907 / DSM 11121 / KW20 / Rd).